The chain runs to 116 residues: Large ribosomal subunit protein bL19 (116 aa).

Belongs to the bacterial ribosomal protein bL19 family.

In terms of biological role, this protein is located at the 30S-50S ribosomal subunit interface and may play a role in the structure and function of the aminoacyl-tRNA binding site. This is Large ribosomal subunit protein bL19 from Haemophilus influenzae (strain 86-028NP).